Consider the following 467-residue polypeptide: MACRTRFAPSPTGYLHIGGARTALYCWLEARRRGGQFVLRIEDTDRQRSTQAAIDAILEAMQWLGLGYDEGPIYQTQRVARYQEVAEQLLAQGKAYYAYETREELDAMREAAMAKQEKPRYDGAAREQNLPYRDDPNRVIRFKNPIGGTVVFDDLIKGRIEIANSELDDMVIFRPDGLPTYNFAVVVDDWDMGITEVIRGDDHINNTPRQINIYAALGAPVPKFAHMPMILDEQGTKLSKRTGAADVMQYKDAGYLPHALINYLARLGWSHGDQELFTPQELLDLFDVKDVNSKAARLDMAKLGWVNQHYLKTDDPASIAPQLEYQLAKLGVDLAAGPAAADVVVALRERVHTLKEMAEKAVVWYQPLETYDAAAVMKHLKLGAEVPLGKARELLAAVDQWSVDSVSAALHDAAAALELGMGKVAQPLRVAITGTQVSPDISQTVYLAGREGALKRIDAALTKIGAA.

The 'HIGH' region motif lies at 9 to 19; it reads PSPTGYLHIGG. Residues 237 to 241 carry the 'KMSKS' region motif; sequence KLSKR. Lys240 contributes to the ATP binding site.

Belongs to the class-I aminoacyl-tRNA synthetase family. Glutamate--tRNA ligase type 1 subfamily. In terms of assembly, monomer.

It localises to the cytoplasm. It carries out the reaction tRNA(Glu) + L-glutamate + ATP = L-glutamyl-tRNA(Glu) + AMP + diphosphate. Functionally, catalyzes the attachment of glutamate to tRNA(Glu) in a two-step reaction: glutamate is first activated by ATP to form Glu-AMP and then transferred to the acceptor end of tRNA(Glu). In Xanthomonas oryzae pv. oryzae (strain MAFF 311018), this protein is Glutamate--tRNA ligase.